Reading from the N-terminus, the 297-residue chain is Flavin-dependent thymidylate synthase (297 aa).

A ThyX domain is found at 41–251; it reads GFVRLVDYMG…PLTYAAFVEY (211 aa). FAD contacts are provided by residues threonine 87, 110–112, and glutamate 118; that span reads RHR. DUMP-binding positions include 107–110, 118–122, and arginine 190; these read QWVR and EYSAR. Positions 110–120 match the ThyX motif motif; it reads RHRTANVNEYS. FAD contacts are provided by residues 206–208 and histidine 212; that span reads DLH. A dUMP-binding site is contributed by arginine 217. Catalysis depends on arginine 217, which acts as the Involved in ionization of N3 of dUMP, leading to its activation.

This sequence belongs to the thymidylate synthase ThyX family. In terms of assembly, homotetramer. Requires FAD as cofactor.

It catalyses the reaction dUMP + (6R)-5,10-methylene-5,6,7,8-tetrahydrofolate + NADPH + H(+) = dTMP + (6S)-5,6,7,8-tetrahydrofolate + NADP(+). It participates in pyrimidine metabolism; dTTP biosynthesis. Catalyzes the reductive methylation of 2'-deoxyuridine-5'-monophosphate (dUMP) to 2'-deoxythymidine-5'-monophosphate (dTMP) while utilizing 5,10-methylenetetrahydrofolate (mTHF) as the methyl donor, and NADPH and FADH(2) as the reductant. The chain is Flavin-dependent thymidylate synthase from Ehrlichia ruminantium (strain Gardel).